We begin with the raw amino-acid sequence, 197 residues long: MAASKDGCGVGEVAAGNGRRLHLGIPEAVFVEDVDSFMKQPGNETADIVLKKLDEQYQKYKFMELNLAQKKRRLKGQIPEIKQTLEILKYKQKKKESTSSLETRFLLADNLYCKASVPPTDKVCLWLGANVMLEYDIDEAQALLEKNLLTATKNLDSLEEDLDFLRDQFTTTEVNMARVYNWDVKRRNKDDSTKNKA.

Residue alanine 2 is modified to N-acetylalanine. Lysine 59 is subject to N6-acetyllysine.

Belongs to the prefoldin subunit alpha family. Heterohexamer of two PFD-alpha type and four PFD-beta type subunits. Binds to the C-terminal part of VHL.

The protein localises to the cytoplasm. It is found in the nucleus. Binds specifically to cytosolic chaperonin (c-CPN) and transfers target proteins to it. Binds to nascent polypeptide chain and promotes folding in an environment in which there are many competing pathways for nonnative proteins. The protein is Prefoldin subunit 3 (VBP1) of Bos taurus (Bovine).